The sequence spans 318 residues: Probable dual-specificity RNA methyltransferase RlmN (318 aa).

Residue E63 is the Proton acceptor of the active site. Residues 69 to 299 (HDYGRTVCVS…VSLRRELGAD (231 aa)) enclose the Radical SAM core domain. The cysteines at positions 76 and 304 are disulfide-linked. [4Fe-4S] cluster-binding residues include C83, C87, and C90. Residues 130–131 (GE), S162, 185–187 (SLH), and N261 contribute to the S-adenosyl-L-methionine site. The S-methylcysteine intermediate role is filled by C304.

It belongs to the radical SAM superfamily. RlmN family. It depends on [4Fe-4S] cluster as a cofactor.

Its subcellular location is the cytoplasm. The catalysed reaction is adenosine(2503) in 23S rRNA + 2 reduced [2Fe-2S]-[ferredoxin] + 2 S-adenosyl-L-methionine = 2-methyladenosine(2503) in 23S rRNA + 5'-deoxyadenosine + L-methionine + 2 oxidized [2Fe-2S]-[ferredoxin] + S-adenosyl-L-homocysteine. It carries out the reaction adenosine(37) in tRNA + 2 reduced [2Fe-2S]-[ferredoxin] + 2 S-adenosyl-L-methionine = 2-methyladenosine(37) in tRNA + 5'-deoxyadenosine + L-methionine + 2 oxidized [2Fe-2S]-[ferredoxin] + S-adenosyl-L-homocysteine. Functionally, specifically methylates position 2 of adenine 2503 in 23S rRNA and position 2 of adenine 37 in tRNAs. This is Probable dual-specificity RNA methyltransferase RlmN from Desulforudis audaxviator (strain MP104C).